A 585-amino-acid polypeptide reads, in one-letter code: Zinc finger protein 614 (585 aa).

The 72-residue stretch at 8-79 (LTLEDVAVEF…DAKIQNKNCP (72 aa)) folds into the KRAB domain. The segment at 205–227 (HACIECEQTFLRKSQLIYHENIC) adopts a C2H2-type 1; atypical zinc-finger fold. The C2H2-type 2; degenerate zinc finger occupies 257–281 (KICIPNEYRKGSTVKSSLITHQQTH). 10 consecutive C2H2-type zinc fingers follow at residues 287-309 (YMCSECGKGFTMKRYLIAHQRTH), 315-337 (YVCKECGKGFTVKSNLIVHQRTH), 343-365 (YICSECGKGFTMKRYLVVHQRTH), 371-393 (YMCSECGKGFTVKSNLIVHQRSH), 399-421 (YICSECGKGFTVKRTLVIHQRTH), 427-449 (YICNECGKGFTTKRTLIIHQRTH), 455-477 (YECNECGKAFSQKICLIQHERCH), 483-505 (FVCTECGKSYSHKYGLITHQRIH), 511-533 (YECNECGKAFTTKSVLNVHQRTH), and 539-561 (YGCSDCEKAFSHLSNLVKHKKMH).

Belongs to the krueppel C2H2-type zinc-finger protein family.

The protein localises to the nucleus. In terms of biological role, may be involved in transcriptional regulation. The sequence is that of Zinc finger protein 614 (ZNF614) from Homo sapiens (Human).